Reading from the N-terminus, the 158-residue chain is Molybdopterin synthase catalytic subunit (158 aa).

Substrate is bound by residues 107–108 (HR), Lys-123, and 130–132 (KKE).

This sequence belongs to the MoaE family. MOCS2B subfamily. Heterotetramer; composed of 2 small (mocs2s) and 2 large (mocs2l) subunits.

The protein localises to the cytoplasm. The catalysed reaction is 2 [molybdopterin-synthase sulfur-carrier protein]-C-terminal-Gly-aminoethanethioate + cyclic pyranopterin phosphate + H2O = molybdopterin + 2 [molybdopterin-synthase sulfur-carrier protein]-C-terminal Gly-Gly + 2 H(+). Its pathway is cofactor biosynthesis; molybdopterin biosynthesis. Catalytic subunit of the molybdopterin synthase complex, a complex that catalyzes the conversion of precursor Z into molybdopterin. Acts by mediating the incorporation of 2 sulfur atoms from thiocarboxylated mocs2s into precursor Z to generate a dithiolene group. This chain is Molybdopterin synthase catalytic subunit (mocs2l), found in Dictyostelium discoideum (Social amoeba).